Reading from the N-terminus, the 1191-residue chain is uncharacterized protein (1191 aa).

WD repeat units follow at residues 558–588, 599–629, 640–670, 682–712, 723–753, 764–794, 805–835, 995–1025, 1036–1066, 1077–1107, and 1118–1148; these read GHRDGVTSVAISSHKNLIASASRDGTVHLWT, GHTGSIYRVDFSPNGKIFATAGQDQTVKIWD, GHQDSVYSVSFSPDGEILASTSRDRTVRLWH, GHTKSVDDAQFSPDGQTLVSVCRDGQIRLWD, LPEVAFFGVNWHPNGNLLAVAADDGTVRLWT, GHDEFVTRVVFTPDGKQLFSSSSNGSVIHWS, GYPEAIFGLALASNGALLAIGAENNLVKVWD, QRKEPIRSVSLHPTLPQLAAGDEQGNLTLWN, AHGDRLNQLQYSPNGKYLLSAGREGTAKIWS, SDPLPIDQIAISPDSQWIATAASDGMVRLWD, and STSGSLLGLDFNRQGQWLLAVAQNGDLQSWP.

This is an uncharacterized protein from Synechocystis sp. (strain ATCC 27184 / PCC 6803 / Kazusa).